We begin with the raw amino-acid sequence, 484 residues long: ATP synthase subunit beta (484 aa).

156-163 (GGAGVGKT) contributes to the ATP binding site.

Belongs to the ATPase alpha/beta chains family. In terms of assembly, F-type ATPases have 2 components, CF(1) - the catalytic core - and CF(0) - the membrane proton channel. CF(1) has five subunits: alpha(3), beta(3), gamma(1), delta(1), epsilon(1). CF(0) has three main subunits: a(1), b(2) and c(9-12). The alpha and beta chains form an alternating ring which encloses part of the gamma chain. CF(1) is attached to CF(0) by a central stalk formed by the gamma and epsilon chains, while a peripheral stalk is formed by the delta and b chains.

It localises to the cell inner membrane. It carries out the reaction ATP + H2O + 4 H(+)(in) = ADP + phosphate + 5 H(+)(out). In terms of biological role, produces ATP from ADP in the presence of a proton gradient across the membrane. The catalytic sites are hosted primarily by the beta subunits. The chain is ATP synthase subunit beta from Rhizorhabdus wittichii (strain DSM 6014 / CCUG 31198 / JCM 15750 / NBRC 105917 / EY 4224 / RW1) (Sphingomonas wittichii).